The following is a 141-amino-acid chain: 6,7-dimethyl-8-ribityllumazine synthase (141 aa).

5-amino-6-(D-ribitylamino)uracil is bound by residues Phe11, 42–44 (ALE), and 66–68 (VVI). 71 to 72 (ET) contributes to the (2S)-2-hydroxy-3-oxobutyl phosphate binding site. The Proton donor role is filled by His74. Asn98 contributes to the 5-amino-6-(D-ribitylamino)uracil binding site. Arg112 serves as a coordination point for (2S)-2-hydroxy-3-oxobutyl phosphate.

It belongs to the DMRL synthase family.

The catalysed reaction is (2S)-2-hydroxy-3-oxobutyl phosphate + 5-amino-6-(D-ribitylamino)uracil = 6,7-dimethyl-8-(1-D-ribityl)lumazine + phosphate + 2 H2O + H(+). It functions in the pathway cofactor biosynthesis; riboflavin biosynthesis; riboflavin from 2-hydroxy-3-oxobutyl phosphate and 5-amino-6-(D-ribitylamino)uracil: step 1/2. Functionally, catalyzes the formation of 6,7-dimethyl-8-ribityllumazine by condensation of 5-amino-6-(D-ribitylamino)uracil with 3,4-dihydroxy-2-butanone 4-phosphate. This is the penultimate step in the biosynthesis of riboflavin. In Sphingopyxis alaskensis (strain DSM 13593 / LMG 18877 / RB2256) (Sphingomonas alaskensis), this protein is 6,7-dimethyl-8-ribityllumazine synthase.